Consider the following 284-residue polypeptide: Bifunctional protein FolD 1 (284 aa).

NADP(+) contacts are provided by residues 164–166, serine 189, and isoleucine 230; that span reads GRS.

Belongs to the tetrahydrofolate dehydrogenase/cyclohydrolase family. As to quaternary structure, homodimer.

It carries out the reaction (6R)-5,10-methylene-5,6,7,8-tetrahydrofolate + NADP(+) = (6R)-5,10-methenyltetrahydrofolate + NADPH. The catalysed reaction is (6R)-5,10-methenyltetrahydrofolate + H2O = (6R)-10-formyltetrahydrofolate + H(+). It participates in one-carbon metabolism; tetrahydrofolate interconversion. Its function is as follows. Catalyzes the oxidation of 5,10-methylenetetrahydrofolate to 5,10-methenyltetrahydrofolate and then the hydrolysis of 5,10-methenyltetrahydrofolate to 10-formyltetrahydrofolate. This is Bifunctional protein FolD 1 from Rubrobacter xylanophilus (strain DSM 9941 / JCM 11954 / NBRC 16129 / PRD-1).